Consider the following 304-residue polypeptide: Ornithine carbamoyltransferase (304 aa).

Residues 53–56 (STRT), Gln-80, Arg-104, and 131–134 (HPCQ) each bind carbamoyl phosphate. L-ornithine-binding positions include Asn-162, Asp-219, and 223–224 (SM). Carbamoyl phosphate contacts are provided by residues 259-260 (CL) and Arg-287.

Belongs to the aspartate/ornithine carbamoyltransferase superfamily. OTCase family.

The protein localises to the cytoplasm. It carries out the reaction carbamoyl phosphate + L-ornithine = L-citrulline + phosphate + H(+). The protein operates within amino-acid biosynthesis; L-arginine biosynthesis; L-arginine from L-ornithine and carbamoyl phosphate: step 1/3. Its function is as follows. Reversibly catalyzes the transfer of the carbamoyl group from carbamoyl phosphate (CP) to the N(epsilon) atom of ornithine (ORN) to produce L-citrulline. In Herminiimonas arsenicoxydans, this protein is Ornithine carbamoyltransferase.